The following is a 285-amino-acid chain: 2-dehydro-3-deoxyphosphooctonate aldolase (285 aa).

Belongs to the KdsA family.

The protein resides in the cytoplasm. It carries out the reaction D-arabinose 5-phosphate + phosphoenolpyruvate + H2O = 3-deoxy-alpha-D-manno-2-octulosonate-8-phosphate + phosphate. The protein operates within carbohydrate biosynthesis; 3-deoxy-D-manno-octulosonate biosynthesis; 3-deoxy-D-manno-octulosonate from D-ribulose 5-phosphate: step 2/3. It functions in the pathway bacterial outer membrane biogenesis; lipopolysaccharide biosynthesis. The protein is 2-dehydro-3-deoxyphosphooctonate aldolase of Bordetella parapertussis (strain 12822 / ATCC BAA-587 / NCTC 13253).